The primary structure comprises 442 residues: D-serine dehydratase (442 aa).

Lysine 118 bears the N6-(pyridoxal phosphate)lysine mark.

The protein belongs to the serine/threonine dehydratase family. DsdA subfamily. Monomer. Pyridoxal 5'-phosphate serves as cofactor.

The catalysed reaction is D-serine = pyruvate + NH4(+). The polypeptide is D-serine dehydratase (Shigella flexneri).